Consider the following 255-residue polypeptide: Cysteine protease avirulence protein AvrRpt2 (255 aa).

Residues 1 to 50 (MKIAPVAINHSPLSREVPSHAAPTQAKQTNLQSEAGDLDARKSSASSPET) form a disordered region. A propeptide spans 1–71 (MKIAPVAINH…RHKIEVPAFG (71 aa)) (removed in mature form). The determinants of cleavage specificity stretch occupies residues 70–71 (FG). Residues 76 to 100 (KKSSKHETGGSSANADSSSVASDST) are disordered. The span at 86–98 (SSANADSSSVASD) shows a compositional bias: low complexity. Cysteine 122 (nucleophile) is an active-site residue. Active-site residues include histidine 208 and aspartate 226.

The protein belongs to the peptidase C70 family. Interacts physically with plant cell ROC1 (Arabidopsis single-domain cyclophilin) and RIN4. Autocleaved inside plant cells upon activation by cyclophilin. Cleavage is crucial in subcellular location and in eliciting HR. Inhibited by cyclosporin A (cyclophilin inhibitor).

Its subcellular location is the secreted. It localises to the host cell membrane. Effector protein involved in gene-for-gene resistance in plants expressing RPS2. Its thiol protease activity is required for the degradation of plant cell RIN4 and consequent activation of RPS2 during bacterial infection. The activation of RPS2 is sufficient for the induction of hypersensitive response (HR) and plant resistance. Cleavage of RIN4 by AvrRpt2 also interferes with RPM1-mediated resistance activated by either AvrRpm1 or AvrB. Contributes to virulence in plants lacking the resistance protein RPS2 promoting pathogen growth and disease symptoms. Inhibits PAMP (pathogen-associated molecular patterns)-induced signaling compromising the host's basal defense system. Blocks plant callose deposition, flg22 (a peptide corresponding to the most conserved domain of flagellin) induced accumulation of PR-1, PR-2 and PR-5 and activation of GST6 transcription. The mechanism of virulence is unknown, but this activity is independent of ethylene and salicylic acid response pathways and independent of RIN4 disappearance. This chain is Cysteine protease avirulence protein AvrRpt2 (avrRpt2), found in Pseudomonas syringae pv. tomato.